Here is a 215-residue protein sequence, read N- to C-terminus: Keratin-associated protein 26-1 (215 aa).

The protein belongs to the PMG family. Interacts with hair keratins.

In the hair cortex, hair keratin intermediate filaments are embedded in an interfilamentous matrix, consisting of hair keratin-associated proteins (KRTAP), which are essential for the formation of a rigid and resistant hair shaft through their extensive disulfide bond cross-linking with abundant cysteine residues of hair keratins. The matrix proteins include the high-sulfur and high-glycine-tyrosine keratins. The sequence is that of Keratin-associated protein 26-1 from Mus musculus (Mouse).